A 94-amino-acid chain; its full sequence is Protein EGG APPARATUS-1 (94 aa).

Residues 1–15 (MSSCPAIVNMKDDDG) are Cytoplasmic-facing. Residues 16 to 36 (IGAMGAAVAFAAMGVFGIYFL) traverse the membrane as a helical; Signal-anchor for type II membrane protein segment. The Extracellular segment spans residues 37 to 94 (WPVVGPTSAGMMMKAPGAAGWVICRAVFEANPQLYFTILRTAGAAAAAATFAACSIAS).

In terms of processing, possible proteolysis of the C-terminal region from the predicted transmembrane domain to permit secretion and transport of the mature protein to the cell walls of the nucellus, allowing the spreading from the egg cell apparatus to the micropylar opening of the ovule. In terms of tissue distribution, expressed only in the egg apparatus, consisting of the egg cell and two synergids. Not detected in the central cell, antipodals, and nucellar and integumental cells.

The protein localises to the membrane. In terms of biological role, involved in short-range signaling required for pollen tube attraction by the female gametophyte. Required for female fertility. The chain is Protein EGG APPARATUS-1 (Ea1) from Zea mays (Maize).